The following is a 179-amino-acid chain: Protein TIFY 11a (179 aa).

The region spanning 62 to 97 (VDGGGQQFTIFYAGKVVVIDRCTPAMAAELMRFASA) is the Tify domain. Residues 115–140 (PIARKASLKRFLAKRKATPASARSSY) carry the Jas motif. The short motif at 117–124 (ARKASLKR) is the Nuclear localization signal element.

This sequence belongs to the TIFY/JAZ family. Interacts with BHLH148. Interacts with COI1A in a coronatine-dependent manner. Interacts with COI1B in a coronatine-dependent manner. Coronatine is an analog of jasmonoyl isoleucine (JA-Ile). Interacts with RSS3. Forms a ternary complex with RSS3 and BHLH094 in the nucleus. Interacts with BHLH062 and NINJA1. Interacts with MYB30. In terms of processing, ubiquitinated. Targeted for degradation by the SCF(COI1) E3 ubiquitin ligase-proteasome pathway during jasmonate signaling.

The protein localises to the nucleus. Repressor of jasmonate (JA) responses. Forms a ternary complex with RSS3 and BHLH94 to negatively regulate JA-responsive genes. Acts as a positive regulator of tolerance to salt stress. Involved in salt tolerance by modulating potassium homeostasis through JA signaling and regulation of the expression of potassium ion transporter genes. Acts as a transcriptional regulator targeted by the SCF(COI1) E3 ubiquitin ligase complexes in the JA signaling pathway, and interacts with BHLH062 that may directly regulate the ion transporter genes. Acts as a positive regulator of tolerance to dehydration stress. Acts as a negative regulator of tolerance to cold stress by interacting with MYB30. The sequence is that of Protein TIFY 11a from Oryza sativa subsp. japonica (Rice).